The following is a 242-amino-acid chain: Orotidine 5'-phosphate decarboxylase (242 aa).

Substrate contacts are provided by residues aspartate 22, lysine 44, 71-80 (DLKYHDIPNT), threonine 130, arginine 190, glutamine 199, glycine 219, and arginine 220. The active-site Proton donor is the lysine 73.

The protein belongs to the OMP decarboxylase family. Type 1 subfamily. In terms of assembly, homodimer.

The enzyme catalyses orotidine 5'-phosphate + H(+) = UMP + CO2. It participates in pyrimidine metabolism; UMP biosynthesis via de novo pathway; UMP from orotate: step 2/2. Its function is as follows. Catalyzes the decarboxylation of orotidine 5'-monophosphate (OMP) to uridine 5'-monophosphate (UMP). The protein is Orotidine 5'-phosphate decarboxylase of Laribacter hongkongensis (strain HLHK9).